Reading from the N-terminus, the 358-residue chain is Carbamoyl phosphate synthase small chain (358 aa).

Residues 1–168 form a CPSase region; the sequence is MKRLLLLEDG…TKLAYASPGV (168 aa). The L-glutamine site is built by Ser-45, Gly-219, and Gly-221. The region spanning 171–357 is the Glutamine amidotransferase type-1 domain; it reads NIVLVDFGLK…INMIDDFQQK (187 aa). Cys-246 functions as the Nucleophile in the catalytic mechanism. The L-glutamine site is built by Met-247, Gln-250, Asn-288, Gly-290, and Tyr-291. Active-site residues include His-330 and Asp-332.

It belongs to the CarA family. As to quaternary structure, composed of two chains; the small (or glutamine) chain promotes the hydrolysis of glutamine to ammonia, which is used by the large (or ammonia) chain to synthesize carbamoyl phosphate. Tetramer of heterodimers (alpha,beta)4.

It catalyses the reaction hydrogencarbonate + L-glutamine + 2 ATP + H2O = carbamoyl phosphate + L-glutamate + 2 ADP + phosphate + 2 H(+). The enzyme catalyses L-glutamine + H2O = L-glutamate + NH4(+). The protein operates within amino-acid biosynthesis; L-arginine biosynthesis; carbamoyl phosphate from bicarbonate: step 1/1. Its pathway is pyrimidine metabolism; UMP biosynthesis via de novo pathway; (S)-dihydroorotate from bicarbonate: step 1/3. Small subunit of the glutamine-dependent carbamoyl phosphate synthetase (CPSase). CPSase catalyzes the formation of carbamoyl phosphate from the ammonia moiety of glutamine, carbonate, and phosphate donated by ATP, constituting the first step of 2 biosynthetic pathways, one leading to arginine and/or urea and the other to pyrimidine nucleotides. The small subunit (glutamine amidotransferase) binds and cleaves glutamine to supply the large subunit with the substrate ammonia. The polypeptide is Carbamoyl phosphate synthase small chain (Streptococcus agalactiae serotype III (strain NEM316)).